The following is a 174-amino-acid chain: ATP synthase subunit delta (174 aa).

The protein belongs to the ATPase delta chain family. As to quaternary structure, F-type ATPases have 2 components, F(1) - the catalytic core - and F(0) - the membrane proton channel. F(1) has five subunits: alpha(3), beta(3), gamma(1), delta(1), epsilon(1). F(0) has three main subunits: a(1), b(2) and c(10-14). The alpha and beta chains form an alternating ring which encloses part of the gamma chain. F(1) is attached to F(0) by a central stalk formed by the gamma and epsilon chains, while a peripheral stalk is formed by the delta and b chains.

It is found in the cell inner membrane. In terms of biological role, f(1)F(0) ATP synthase produces ATP from ADP in the presence of a proton or sodium gradient. F-type ATPases consist of two structural domains, F(1) containing the extramembraneous catalytic core and F(0) containing the membrane proton channel, linked together by a central stalk and a peripheral stalk. During catalysis, ATP synthesis in the catalytic domain of F(1) is coupled via a rotary mechanism of the central stalk subunits to proton translocation. This protein is part of the stalk that links CF(0) to CF(1). It either transmits conformational changes from CF(0) to CF(1) or is implicated in proton conduction. This is ATP synthase subunit delta from Francisella tularensis subsp. tularensis (strain FSC 198).